Here is a 130-residue protein sequence, read N- to C-terminus: Small ribosomal subunit protein uS8 (130 aa).

This sequence belongs to the universal ribosomal protein uS8 family. Part of the 30S ribosomal subunit.

Functionally, one of the primary rRNA binding proteins, it binds directly to 16S rRNA central domain where it helps coordinate assembly of the platform of the 30S subunit. The sequence is that of Small ribosomal subunit protein uS8 from Natronomonas pharaonis (strain ATCC 35678 / DSM 2160 / CIP 103997 / JCM 8858 / NBRC 14720 / NCIMB 2260 / Gabara) (Halobacterium pharaonis).